A 239-amino-acid chain; its full sequence is MGRAFEVRKASMAKTAAAKSKVYSRYGREIYMAAKAGTPDPETNQALKRVIERAKKEQVTADIIKRNIDKAKGGSDENYAEIRYEGFGPEGSLIIIECLTDNTNRTISDVRKLFNKAYGKLGVSGSVLHQFDHKAVFEVEAPENKLLEILLENDVDITDYEAEEGVVTIYAEPTEYGKIADVLKDNNLESKEEAIMFIPMQTMEIKDPEEQAKFDRLIEGLNELDDVKDVFHNVISSGE.

Belongs to the TACO1 family.

The protein localises to the cytoplasm. In Acholeplasma laidlawii (strain PG-8A), this protein is Probable transcriptional regulatory protein ACL_0044.